The sequence spans 382 residues: Palmitoyltransferase ZDHHC16B (382 aa).

Residues 1 to 75 lie on the Cytoplasmic side of the membrane; the sequence is MRSWRWSVSR…IYWLVDNMTR (75 aa). Residues 76–96 form a helical membrane-spanning segment; that stretch reads WFGVVFVCLVMALTSSVVVIV. The Lumenal portion of the chain corresponds to 97 to 107; it reads YLCVLPIIFSS. A helical membrane pass occupies residues 108–130; the sequence is YPVYWILWHLCYGHWNLLMVVFH. The Cytoplasmic segment spans residues 131–196; that stretch reads YYKATTTQPG…NNCVGHFNHR (66 aa). The region spanning 153–203 is the DHHC domain; the sequence is TICKKCIVPKPARTHHCSICNRCILKMDHHCPWLNNCVGHFNHRYFFSFCL. The active-site S-palmitoyl cysteine intermediate is the cysteine 183. The helical transmembrane segment at 197 to 217 threads the bilayer; that stretch reads YFFSFCLFMTMGCVYCSISAK. Residues 218–275 lie on the Lumenal side of the membrane; that stretch reads DMFLDAYNAIESGRYKGGASQGEAVPGAGLIYISFQHQSSYQTPPPAFTHQERMVHKS. Residues 276-296 form a helical membrane-spanning segment; the sequence is LVYLWVLTSSVAVALGALTLW. Topologically, residues 297-382 are cytoplasmic; the sequence is HAILITRGET…PAYKSSTTAI (86 aa).

This sequence belongs to the DHHC palmitoyltransferase family.

The protein resides in the endoplasmic reticulum membrane. The catalysed reaction is L-cysteinyl-[protein] + hexadecanoyl-CoA = S-hexadecanoyl-L-cysteinyl-[protein] + CoA. Its function is as follows. Palmitoyl acyltransferase that mediates palmitoylation of proteins and is required during embryonic heart development. Involved in the proliferation of neural stem cells by regulating the FGF/ERK pathway. In Danio rerio (Zebrafish), this protein is Palmitoyltransferase ZDHHC16B.